The following is a 243-amino-acid chain: Proteasome subunit beta (243 aa).

A propeptide spans 1-49 (MRTPTGDLSDGPAEELGRDQPVFGPEIGEFEHSERRAAQADGEGEMKTG) (removed in mature form; by autocatalysis). Residues 1 to 50 (MRTPTGDLSDGPAEELGRDQPVFGPEIGEFEHSERRAAQADGEGEMKTGT) are disordered. The segment covering 29 to 38 (EFEHSERRAA) has biased composition (basic and acidic residues). The active-site Nucleophile is the T50.

It belongs to the peptidase T1B family. In terms of assembly, the 20S proteasome core is composed of 14 alpha and 14 beta subunits that assemble into four stacked heptameric rings, resulting in a barrel-shaped structure. The two inner rings, each composed of seven catalytic beta subunits, are sandwiched by two outer rings, each composed of seven alpha subunits. The catalytic chamber with the active sites is on the inside of the barrel. Has a gated structure, the ends of the cylinder being occluded by the N-termini of the alpha-subunits. Is capped at one or both ends by the proteasome regulatory ATPase, PAN.

Its subcellular location is the cytoplasm. It catalyses the reaction Cleavage of peptide bonds with very broad specificity.. With respect to regulation, the formation of the proteasomal ATPase PAN-20S proteasome complex, via the docking of the C-termini of PAN into the intersubunit pockets in the alpha-rings, triggers opening of the gate for substrate entry. Interconversion between the open-gate and close-gate conformations leads to a dynamic regulation of the 20S proteasome proteolysis activity. Component of the proteasome core, a large protease complex with broad specificity involved in protein degradation. In Halorubrum lacusprofundi (strain ATCC 49239 / DSM 5036 / JCM 8891 / ACAM 34), this protein is Proteasome subunit beta.